A 255-amino-acid chain; its full sequence is 5'-nucleotidase SurE (255 aa).

Residues aspartate 8, aspartate 9, serine 40, and asparagine 93 each contribute to the a divalent metal cation site.

Belongs to the SurE nucleotidase family. A divalent metal cation serves as cofactor.

The protein resides in the cytoplasm. The enzyme catalyses a ribonucleoside 5'-phosphate + H2O = a ribonucleoside + phosphate. Its function is as follows. Nucleotidase that shows phosphatase activity on nucleoside 5'-monophosphates. The sequence is that of 5'-nucleotidase SurE from Rhodopseudomonas palustris (strain BisA53).